A 241-amino-acid polypeptide reads, in one-letter code: Probable 2-phosphosulfolactate phosphatase (241 aa).

It belongs to the ComB family. Mg(2+) is required as a cofactor.

The catalysed reaction is (2R)-O-phospho-3-sulfolactate + H2O = (2R)-3-sulfolactate + phosphate. This Deinococcus geothermalis (strain DSM 11300 / CIP 105573 / AG-3a) protein is Probable 2-phosphosulfolactate phosphatase.